Here is a 328-residue protein sequence, read N- to C-terminus: Malate dehydrogenase (328 aa).

11-17 contributes to the NAD(+) binding site; sequence GAAGQIG. Residues Arg-94 and Arg-100 each contribute to the substrate site. NAD(+)-binding positions include Asn-107, Gln-114, and 131–133; that span reads VGN. Asn-133 and Arg-164 together coordinate substrate. The active-site Proton acceptor is the His-189.

It belongs to the LDH/MDH superfamily. MDH type 2 family.

It catalyses the reaction (S)-malate + NAD(+) = oxaloacetate + NADH + H(+). Catalyzes the reversible oxidation of malate to oxaloacetate. The chain is Malate dehydrogenase from Xanthomonas oryzae pv. oryzae (strain MAFF 311018).